The primary structure comprises 378 residues: Heme chaperone HemW (378 aa).

Residues 1 to 237 form the Radical SAM core domain; the sequence is MVKLPPLSLY…LTAAGYQQYE (237 aa). Residue Tyr10 participates in S-adenosyl-L-methionine binding. The [4Fe-4S] cluster site is built by Cys16, Cys20, and Cys23. Residues Gly66, 67–68, Glu99, Gln126, Arg138, and Asp163 each bind S-adenosyl-L-methionine; that span reads GT.

It belongs to the anaerobic coproporphyrinogen-III oxidase family. HemW subfamily. As to quaternary structure, binding of the [4Fe-4S] cofactor promotes dimerization. [4Fe-4S] cluster is required as a cofactor.

The protein localises to the cytoplasm. Probably acts as a heme chaperone, transferring heme to the NarI subunit of the respiratory enzyme nitrate reductase; transfer may be stimulated by NADH. Binds one molecule of heme per monomer, possibly covalently. Heme binding is not affected by either [4Fe-4S] or S-adenosyl-L-methionine (SAM)-binding. Does not have coproporphyrinogen III dehydrogenase activity in vitro. Binds 1 [4Fe-4S] cluster. The cluster is coordinated with 3 cysteines and an exchangeable S-adenosyl-L-methionine. The chain is Heme chaperone HemW from Escherichia coli (strain K12).